Consider the following 233-residue polypeptide: Somatolactin (233 aa).

Residues 1–24 (MNMMQVMQSVVWAVLLWPCLVSLG) form the signal peptide. Intrachain disulfides connect cysteine 29-cysteine 39, cysteine 89-cysteine 205, and cysteine 222-cysteine 230.

It belongs to the somatotropin/prolactin family. In terms of tissue distribution, pituitary gland.

The protein resides in the secreted. Functionally, may be associated with ion regulation and reproduction. The sequence is that of Somatolactin from Oncorhynchus keta (Chum salmon).